Reading from the N-terminus, the 133-residue chain is Large ribosomal subunit protein bL17 (133 aa).

It belongs to the bacterial ribosomal protein bL17 family. Part of the 50S ribosomal subunit. Contacts protein L32.

The sequence is that of Large ribosomal subunit protein bL17 from Nitratidesulfovibrio vulgaris (strain DSM 19637 / Miyazaki F) (Desulfovibrio vulgaris).